The primary structure comprises 539 residues: Prolyl 4-hydroxylase subunit alpha-2 (539 aa).

Positions 1-16 (MRAVLLVCLLAGLAHA) are cleaved as a signal peptide. N110 is a glycosylation site (N-linked (GlcNAc...) asparagine). In terms of domain architecture, Fe2OG dioxygenase spans 401 to 509 (TSEELQVANY…KWVSNKWIHE (109 aa)). Positions 419, 421, and 490 each coordinate Fe cation. K500 is a binding site for 2-oxoglutarate.

Belongs to the P4HA family. As to quaternary structure, heterotetramer of two alpha chains and two beta chains. Exist either as a phy-2(2)/pdi-2(2) tetramer or as a phy-1/phy-2/pdi-2(2) tetramer. The cofactor is Fe(2+). L-ascorbate is required as a cofactor.

Its subcellular location is the endoplasmic reticulum lumen. It carries out the reaction L-prolyl-[collagen] + 2-oxoglutarate + O2 = trans-4-hydroxy-L-prolyl-[collagen] + succinate + CO2. In terms of biological role, catalyzes the post-translational formation of 4-hydroxyproline in -Xaa-Pro-Gly- sequences in collagens and other proteins. This is Prolyl 4-hydroxylase subunit alpha-2 (phy-2) from Caenorhabditis elegans.